A 534-amino-acid chain; its full sequence is Ulvan lyase NLR42 (534 aa).

The signal sequence occupies residues 1–47; sequence MVFFKDLFIFKSLIKGSLYSGHMKKKLLNYLPLFALMLFTVSMMAQT. Cys-59 and Cys-89 are disulfide-bonded. Gly-63, Asn-68, Asp-86, Thr-88, Ala-91, and Asp-92 together coordinate Ca(2+). Residue Tyr-164 participates in substrate binding. The Proton acceptor role is filled by Lys-169. Substrate is bound by residues 218-223 and 288-291; these read SGAAGR and YRVK. Tyr-288 functions as the Proton donor/acceptor in the catalytic mechanism. Residues 316 to 449 are ulvan-binding domain; that stretch reads PAADIYRIKN…SKWNLESTTL (134 aa). The propeptide at 450–534 is removed by the type IX secretion system (T9SS); sequence SVDSQQIASV…KVYQTKLIVN (85 aa).

The protein belongs to the polysaccharide lyase 28 family. Ca(2+) serves as cofactor.

The protein localises to the secreted. Its function is as follows. Ulvan lyase involved in ulvan degradation. Ulvan is the main polysaccharide component of the Ulvales (green seaweed) cell wall. It is composed of disaccharide building blocks comprising 3-sulfated rhamnose (Rha3S) linked to D-glucuronic acid (GlcA), L-iduronic acid (IduA), or D-xylose (Xyl). Ulvan lyase catalyzes the endolytic cleavage of the glycosidic bond between Rha3S and the uronic acids GlcA or IduA, producing oligosaccharides that have unsaturated 4-deoxy-L-threo-hex-4-enopyranosiduronic acid (deltaUA) at the non-reducing end. This results eventually in the degradation of the ulvan polysaccharide into deltaUA-Rha3S disaccharides and deltaUA-Rha3S-Xyl-Rha3S tetrasaccharides. The sequence is that of Ulvan lyase NLR42 from Nonlabens ulvanivorans (Persicivirga ulvanivorans).